A 553-amino-acid chain; its full sequence is 4-coumarate--CoA ligase (553 aa).

ATP is bound by residues Ser198, Ser199, Gly200, Thr201, Thr202, and Lys206. 2 residues coordinate (E)-4-coumaroyl-AMP: Tyr248 and Ser252. Lys269 provides a ligand contact to CoA. Positions 271 to 340 (EIVPFLELIQ…AKFPNAKLGQ (70 aa)) are SBD1. Residues Ala318, Gln340, Gly341, Thr345, and Met353 each contribute to the (E)-4-coumaroyl-AMP site. 3 residues coordinate ATP: Gln340, Gly341, and Thr345. The segment at 341-408 (GYGMTEAGPV…IRGDQIMKGY (68 aa)) is SBD2. Positions 429 and 444 each coordinate ATP. (E)-4-coumaroyl-AMP contacts are provided by Lys446 and Lys450. Lys452 and Gly453 together coordinate CoA. Lys535 provides a ligand contact to ATP.

It belongs to the ATP-dependent AMP-binding enzyme family. Mg(2+) serves as cofactor.

The enzyme catalyses (E)-4-coumarate + ATP + CoA = (E)-4-coumaroyl-CoA + AMP + diphosphate. It catalyses the reaction (E)-4-coumarate + ATP + H(+) = (E)-4-coumaroyl-AMP + diphosphate. It carries out the reaction (E)-4-coumaroyl-AMP + CoA = (E)-4-coumaroyl-CoA + AMP + H(+). It participates in phytoalexin biosynthesis; 3,4',5-trihydroxystilbene biosynthesis; 3,4',5-trihydroxystilbene from trans-4-coumarate: step 1/2. Its function is as follows. Carboxylate--CoA ligase that may use 4-coumarate as substrate. Follows a two-step reaction mechanism, wherein the carboxylate substrate first undergoes adenylation by ATP, followed by a thioesterification in the presence of CoA to yield the final CoA thioester. This is 4-coumarate--CoA ligase from Vanilla planifolia (Vanilla).